A 100-amino-acid polypeptide reads, in one-letter code: Aspartyl/glutamyl-tRNA(Asn/Gln) amidotransferase subunit C (100 aa).

It belongs to the GatC family. In terms of assembly, heterotrimer of A, B and C subunits.

It catalyses the reaction L-glutamyl-tRNA(Gln) + L-glutamine + ATP + H2O = L-glutaminyl-tRNA(Gln) + L-glutamate + ADP + phosphate + H(+). The catalysed reaction is L-aspartyl-tRNA(Asn) + L-glutamine + ATP + H2O = L-asparaginyl-tRNA(Asn) + L-glutamate + ADP + phosphate + 2 H(+). Allows the formation of correctly charged Asn-tRNA(Asn) or Gln-tRNA(Gln) through the transamidation of misacylated Asp-tRNA(Asn) or Glu-tRNA(Gln) in organisms which lack either or both of asparaginyl-tRNA or glutaminyl-tRNA synthetases. The reaction takes place in the presence of glutamine and ATP through an activated phospho-Asp-tRNA(Asn) or phospho-Glu-tRNA(Gln). The protein is Aspartyl/glutamyl-tRNA(Asn/Gln) amidotransferase subunit C of Streptococcus pneumoniae serotype 19F (strain G54).